Consider the following 240-residue polypeptide: ATP-dependent dethiobiotin synthetase BioD (240 aa).

Residue 15–20 (EIGKTF) coordinates ATP. T19 lines the Mg(2+) pocket. Residue K40 is part of the active site. Residues D57, 118–121 (EGVG), and 178–179 (NR) each bind ATP. Positions 57 and 118 each coordinate Mg(2+).

It belongs to the dethiobiotin synthetase family. Homodimer. Mg(2+) serves as cofactor.

The protein localises to the cytoplasm. It catalyses the reaction (7R,8S)-7,8-diammoniononanoate + CO2 + ATP = (4R,5S)-dethiobiotin + ADP + phosphate + 3 H(+). Its pathway is cofactor biosynthesis; biotin biosynthesis; biotin from 7,8-diaminononanoate: step 1/2. Functionally, catalyzes a mechanistically unusual reaction, the ATP-dependent insertion of CO2 between the N7 and N8 nitrogen atoms of 7,8-diaminopelargonic acid (DAPA, also called 7,8-diammoniononanoate) to form a ureido ring. The protein is ATP-dependent dethiobiotin synthetase BioD of Burkholderia pseudomallei (strain 1106a).